We begin with the raw amino-acid sequence, 751 residues long: E3 ubiquitin-protein ligase SMURF2 (751 aa).

Positions M1–K119 constitute a C2 domain. Positions N157 to R190 constitute a WW 1 domain. Polar residues predominate over residues G214–P226. A disordered region spans residues G214–Q236. WW domains follow at residues P251–V284 and G297–L330. Residues R417 to E751 enclose the HECT domain. C719 functions as the Glycyl thioester intermediate in the catalytic mechanism.

Its subcellular location is the nucleus. The protein resides in the cytoplasm. The protein localises to the cell membrane. It localises to the membrane raft. The catalysed reaction is S-ubiquitinyl-[E2 ubiquitin-conjugating enzyme]-L-cysteine + [acceptor protein]-L-lysine = [E2 ubiquitin-conjugating enzyme]-L-cysteine + N(6)-ubiquitinyl-[acceptor protein]-L-lysine.. The protein operates within protein modification; protein ubiquitination. Its function is as follows. E3 ubiquitin-protein ligase which accepts ubiquitin from an E2 ubiquitin-conjugating enzyme in the form of a thioester and then directly transfers the ubiquitin to targeted substrates. In Xenopus laevis (African clawed frog), this protein is E3 ubiquitin-protein ligase SMURF2 (smurf2).